A 273-amino-acid polypeptide reads, in one-letter code: Dermonecrotic toxin LspaSicTox-alphaIA2iv (273 aa).

Residue His-5 is part of the active site. Residues Glu-25 and Asp-27 each contribute to the Mg(2+) site. The active-site Nucleophile is the His-41. Disulfide bonds link Cys-45–Cys-51 and Cys-47–Cys-190. Asp-85 is a binding site for Mg(2+).

It belongs to the arthropod phospholipase D family. Class II subfamily. Requires Mg(2+) as cofactor. In terms of tissue distribution, expressed by the venom gland.

The protein localises to the secreted. It catalyses the reaction an N-(acyl)-sphingosylphosphocholine = an N-(acyl)-sphingosyl-1,3-cyclic phosphate + choline. The enzyme catalyses an N-(acyl)-sphingosylphosphoethanolamine = an N-(acyl)-sphingosyl-1,3-cyclic phosphate + ethanolamine. The catalysed reaction is a 1-acyl-sn-glycero-3-phosphocholine = a 1-acyl-sn-glycero-2,3-cyclic phosphate + choline. It carries out the reaction a 1-acyl-sn-glycero-3-phosphoethanolamine = a 1-acyl-sn-glycero-2,3-cyclic phosphate + ethanolamine. Functionally, dermonecrotic toxins cleave the phosphodiester linkage between the phosphate and headgroup of certain phospholipids (sphingolipid and lysolipid substrates), forming an alcohol (often choline) and a cyclic phosphate. This toxin acts on sphingomyelin (SM). It may also act on ceramide phosphoethanolamine (CPE), lysophosphatidylcholine (LPC) and lysophosphatidylethanolamine (LPE), but not on lysophosphatidylserine (LPS), and lysophosphatidylglycerol (LPG). It acts by transphosphatidylation, releasing exclusively cyclic phosphate products as second products. Induces dermonecrosis, hemolysis, increased vascular permeability, edema, inflammatory response, and platelet aggregation. In Loxosceles spadicea (Recluse spider), this protein is Dermonecrotic toxin LspaSicTox-alphaIA2iv.